A 472-amino-acid chain; its full sequence is Coenzyme F(430) synthetase (472 aa).

119–125 (GVKAKTS) lines the ATP pocket.

This sequence belongs to the MurCDEF family.

The enzyme catalyses 15,17(3)-seco-F430-17(3)-acid + ATP = coenzyme F430 + ADP + phosphate. Its function is as follows. Involved in the biosynthesis of the unique nickel-containing tetrapyrrole coenzyme F430, the prosthetic group of methyl-coenzyme M reductase (MCR), which plays a key role in methanogenesis and anaerobic methane oxidation. Catalyzes the activation the g-propionate side chain of 15,17(3)-seco-F430-17(3)-acid (seco-F430) for intramolecular C-C bond formation to yield the carbocyclic F ring of coenzyme F430. The sequence is that of Coenzyme F(430) synthetase from Methanosarcina acetivorans (strain ATCC 35395 / DSM 2834 / JCM 12185 / C2A).